The following is a 626-amino-acid chain: Putative Xaa-Pro dipeptidyl-peptidase (626 aa).

Catalysis depends on charge relay system residues serine 231, aspartate 348, and histidine 379.

The protein belongs to the peptidase S15 family.

The catalysed reaction is Hydrolyzes Xaa-Pro-|- bonds to release unblocked, N-terminal dipeptides from substrates including Ala-Pro-|-p-nitroanilide and (sequentially) Tyr-Pro-|-Phe-Pro-|-Gly-Pro-|-Ile.. This Rhodopirellula baltica (strain DSM 10527 / NCIMB 13988 / SH1) protein is Putative Xaa-Pro dipeptidyl-peptidase.